The following is a 341-amino-acid chain: Methionine import ATP-binding protein MetN 2 (341 aa).

One can recognise an ABC transporter domain in the interval 2–241; the sequence is IELKEVVKEY…PQHAVTKRFV (240 aa). 38-45 is a binding site for ATP; that stretch reads GFSGAGKS.

Belongs to the ABC transporter superfamily. Methionine importer (TC 3.A.1.24) family. As to quaternary structure, the complex is composed of two ATP-binding proteins (MetN), two transmembrane proteins (MetI) and a solute-binding protein (MetQ).

It localises to the cell membrane. It catalyses the reaction L-methionine(out) + ATP + H2O = L-methionine(in) + ADP + phosphate + H(+). It carries out the reaction D-methionine(out) + ATP + H2O = D-methionine(in) + ADP + phosphate + H(+). Its function is as follows. Part of the ABC transporter complex MetNIQ involved in methionine import. Responsible for energy coupling to the transport system. The protein is Methionine import ATP-binding protein MetN 2 of Staphylococcus aureus (strain MRSA252).